Here is a 249-residue protein sequence, read N- to C-terminus: Neurotrophic factor BDNF precursor form (249 aa).

Positions 1–18 (MTILFLTMVISYFGCMKA) are cleaved as a signal peptide. A propeptide spanning residues 19–130 (APMKEANVHG…AANMSMRVRR (112 aa)) is cleaved from the precursor. Asn123 carries an N-linked (GlcNAc...) asparagine glycan. 3 disulfides stabilise this stretch: Cys143/Cys210, Cys188/Cys239, and Cys198/Cys241.

It belongs to the NGF-beta family. In terms of assembly, monomers and homodimers. Binds to NTRK2/TRKB. Can form heterodimers with other neurotrophin family members, such as NTF3 and NTF4 (in vitro), but the physiological relevance of this is not clear. BDNF precursor form: interacts with the heterodimer formed by NGFR and SORCS2. Mature BDNF has much lower affinity for the heterodimer formed by NGFR and SORCS2. In terms of processing, N-glycosylated and glycosulfated, contrary to mature BDNF. Post-translationally, mature BDNF is produced by proteolytic removal of the propeptide, catalyzed by a FURIN family member. In addition, the precursor form is proteolytically cleaved within the propeptide, but this is not an obligatory intermediate for the production of mature BDNF. Can be converted into mature BDNF by plasmin (PLG).

Its subcellular location is the secreted. Functionally, important signaling molecule that activates signaling cascades downstream of NTRK2. During development, promotes the survival and differentiation of selected neuronal populations of the peripheral and central nervous systems. Participates in axonal growth, pathfinding and in the modulation of dendritic growth and morphology. Major regulator of synaptic transmission and plasticity at adult synapses in many regions of the CNS. The versatility of BDNF is emphasized by its contribution to a range of adaptive neuronal responses including long-term potentiation (LTP), long-term depression (LTD), certain forms of short-term synaptic plasticity, as well as homeostatic regulation of intrinsic neuronal excitability. In terms of biological role, important signaling molecule that activates signaling cascades downstream of NTRK2. Activates signaling cascades via the heterodimeric receptor formed by NGFR and SORCS2. Signaling via NGFR and SORCS2 plays a role in synaptic plasticity and long-term depression (LTD). Binding to NGFR and SORCS2 promotes neuronal apoptosis. Promotes neuronal growth cone collapse. The chain is Neurotrophic factor BDNF precursor form (Bdnf) from Rattus norvegicus (Rat).